Here is a 527-residue protein sequence, read N- to C-terminus: Flavonoid 3',5'-hydroxylase CYP75B138 (527 aa).

The helical transmembrane segment at 6–26 (LDIILFISAIVFLSIYYYNLF) threads the bilayer. Cys459 lines the heme pocket.

This sequence belongs to the cytochrome P450 family. It depends on heme as a cofactor. Expressed in young cromes.

The protein resides in the membrane. The catalysed reaction is a 3',5'-unsubstituted flavanone + 2 reduced [NADPH--hemoprotein reductase] + 2 O2 = a 3',5'-dihydroxyflavanone + 2 oxidized [NADPH--hemoprotein reductase] + 2 H2O + 2 H(+). It catalyses the reaction (2S)-naringenin + 2 reduced [NADPH--hemoprotein reductase] + 2 O2 = (2S)-dihydrotricetin + 2 oxidized [NADPH--hemoprotein reductase] + 2 H2O + 2 H(+). It carries out the reaction (2R,3R)-dihydrokaempferol + 2 reduced [NADPH--hemoprotein reductase] + 2 O2 = (2R,3R)-dihydromyricetin + 2 oxidized [NADPH--hemoprotein reductase] + 2 H2O + 2 H(+). The enzyme catalyses kaempferol + 2 reduced [NADPH--hemoprotein reductase] + 2 O2 = myricetin + 2 oxidized [NADPH--hemoprotein reductase] + 2 H2O + 2 H(+). The protein operates within flavonoid metabolism. Functionally, flavonoid 3',5'-hydroxylase that catalyzes the 3'- and 5'-hydroxylation of flavanones, dihydroflavonols and flavonols. Converts narigenin to dihydrotricetin, dihydrokaempferol to dihydromyricetin and kaempferol to myricetin. This is Flavonoid 3',5'-hydroxylase CYP75B138 from Crocosmia x crocosmiiflora (Montbretia).